Here is a 486-residue protein sequence, read N- to C-terminus: ATP synthase subunit beta (486 aa).

164–171 contacts ATP; it reads GGAGVGKT.

This sequence belongs to the ATPase alpha/beta chains family. As to quaternary structure, F-type ATPases have 2 components, CF(1) - the catalytic core - and CF(0) - the membrane proton channel. CF(1) has five subunits: alpha(3), beta(3), gamma(1), delta(1), epsilon(1). CF(0) has four main subunits: a(1), b(1), b'(1) and c(9-12).

The protein localises to the cellular thylakoid membrane. The enzyme catalyses ATP + H2O + 4 H(+)(in) = ADP + phosphate + 5 H(+)(out). Functionally, produces ATP from ADP in the presence of a proton gradient across the membrane. The catalytic sites are hosted primarily by the beta subunits. The protein is ATP synthase subunit beta of Prochlorococcus marinus (strain AS9601).